Reading from the N-terminus, the 383-residue chain is Chromatin structure-remodeling complex subunit SFH1 (383 aa).

The interval 61–80 (DDDEKVHSDNGKGEGEEVGH) is disordered. The segment covering 64–80 (EKVHSDNGKGEGEEVGH) has biased composition (basic and acidic residues).

This sequence belongs to the SNF5 family.

The protein localises to the nucleus. Part of the chromatin structure-remodeling complex (RSC) which is involved in transcription regulation and nucleosome positioning. RSC is responsible for the transfer of a histone octamer from a nucleosome core particle to naked DNA. The reaction requires ATP and involves an activated RSC-nucleosome intermediate. Remodeling reaction also involves DNA translocation, DNA twist and conformational change. As a reconfigurer of centromeric and flanking nucleosomes, RSC complex is required both for proper kinetochore function in chromosome segregation and, via a PKC1-dependent signaling pathway, for organization of the cellular cytoskeleton. This subunit is essential for mitotic growth and required for cell cycle progression. The polypeptide is Chromatin structure-remodeling complex subunit SFH1 (SFH1) (Eremothecium gossypii (strain ATCC 10895 / CBS 109.51 / FGSC 9923 / NRRL Y-1056) (Yeast)).